The chain runs to 568 residues: Phosphoprotein (568 aa).

Residues 1–24 (MDQDAFFFERDPEAEGEAPRKQES) are disordered. The segment covering 7–23 (FFERDPEAEGEAPRKQE) has biased composition (basic and acidic residues). The N0 binding stretch occupies residues 33 to 41 (DVVLSYKPT). The disordered stretch occupies residues 45–324 (EDRSWLHGII…ANEEETSNTS (280 aa)). Positions 58–105 (EENKPSCKADDNNKDRAISTPTQDHRSGEESGISRRTSESKTETHARL) are enriched in basic and acidic residues. Positions 107–121 (DQQSIHRASRRGTSP) are enriched in polar residues. Composition is skewed to basic and acidic residues over residues 132–144 (RNTRIDEDSPNER) and 151–167 (LTDEDRKMAEDSNKREE). Positions 190 to 208 (RTNNNGRSMETSSTHSTRI) are enriched in polar residues. A compositionally biased stretch (basic and acidic residues) spans 239 to 253 (TRSERTQNSELHKST). Residues 294–305 (YTMNNANNNTKS) are compositionally biased toward polar residues. Residues 344–411 (FELSRSASHV…SSRDLHKRFS (68 aa)) form a multimerization region. Residues 387–416 (EENRTLLKQIQEEINSSRDLHKRFSEYQKE) are a coiled coil. Positions 412-445 (EYQKEQNSLMMANLSTLHIITDRGGKTGDPSDTT) are l protein binding. Residues 434-455 (RGGKTGDPSDTTRSPSVFTKGK) are disordered. Polar residues predominate over residues 441-450 (PSDTTRSPSV). Positions 479 to 568 (DLIREDELRD…FEEDIDSLTN (90 aa)) are interaction with the nucleocapsid (N-RNA).

It belongs to the respirovirus P protein family. In terms of assembly, homotetramer. Interacts (via multimerization domain) with polymerase L; this interaction forms the polymerase complex. Interacts (via N-terminus) with N0; this interaction allows P to chaperon N0 before encapsidation and form the N-P complex. Interacts (via C-terminus) with N-RNA template; this interaction positions the polymerase on the template.

Essential cofactor of the RNA polymerase L that plays a central role in the transcription and replication by forming the polymerase complex with RNA polymerase L and recruiting L to the genomic N-RNA template for RNA synthesis. Also plays a central role in the encapsidation of nascent RNA chains by forming the encapsidation complex with the nucleocapsid protein N (N-P complex). Acts as a chaperone for newly synthesized free N protein, so-called N0, allowing encapsidation of nascent RNA chains during replication. The nucleoprotein protein N prevents excessive phosphorylation of P, which leads to down-regulation of viral transcription/ replication. Participates, together with N, in the formation of viral factories (viroplasms), which are large inclusions in the host cytoplasm where replication takes place. Recruits host PI4KB and remodel the host endoplasmic reticulum membrane to form viral replication factories. The protein is Phosphoprotein (P/C) of Human parainfluenza 1 virus (strain C39) (HPIV-1).